Here is a 201-residue protein sequence, read N- to C-terminus: Ras-related protein Rab-9A (201 aa).

Ala-2 is modified (N-acetylalanine). Gly-17, Val-18, Gly-19, Lys-20, Ser-21, Ser-22, Asp-33, Ser-34, His-38, and Thr-39 together coordinate GTP. Ser-21 is a Mg(2+) binding site. A Switch 1 motif is present at residues 31-42 (KFDSQLFHTIGV). The residue at position 34 (Ser-34) is a Phosphoserine. Thr-39 and Asp-62 together coordinate Mg(2+). The short motif at 64–78 (AGQERFRSLRTPFYR) is the Switch 2 element. Residues Gly-65, Asn-124, Lys-125, Asp-127, Ala-155, and Lys-156 each contribute to the GTP site. Ser-179 is modified (phosphoserine). Thr-187 is modified (phosphothreonine). 2 S-geranylgeranyl cysteine lipidation sites follow: Cys-200 and Cys-201.

It belongs to the small GTPase superfamily. Rab family. As to quaternary structure, interacts (preferentially in its GTP-bound form) with GCC2 (via its GRIP domain). Interacts (GTP-bound form) with SGSM1; the GDP-bound form has much lower affinity for SGSM1. Interacts with SGSM2. The GTP-bound form but not the GDP-bound form interacts with HPS4. The GTP-bound form but not the GDP-bound form interacts with BLOC-3 complex (heterodimer of HPS1 and HPS4) but does not interact with HPS1 alone. Interacts (GTP-bound form) with NDE1; two RAB9A-GTP molecules lie on the opposite sides of the NDE1 homodimer; the interaction leads to RAB9A-dynein motor tethering. Interacts (GTP-bound form) with NDEL1. Mg(2+) is required as a cofactor.

The protein resides in the cell membrane. It is found in the endoplasmic reticulum membrane. Its subcellular location is the golgi apparatus membrane. The protein localises to the late endosome. It localises to the cytoplasmic vesicle. The protein resides in the phagosome membrane. It is found in the phagosome. Its subcellular location is the cytoplasmic vesicle membrane. The protein localises to the melanosome. The enzyme catalyses GTP + H2O = GDP + phosphate + H(+). Regulated by guanine nucleotide exchange factors (GEFs) which promote the exchange of bound GDP for free GTP. Regulated by GTPase activating proteins (GAPs) which increase the GTP hydrolysis activity. Inhibited by GDP dissociation inhibitors (GDIs). Its function is as follows. The small GTPases Rab are key regulators of intracellular membrane trafficking, from the formation of transport vesicles to their fusion with membranes. Rabs cycle between an inactive GDP-bound form and an active GTP-bound form that is able to recruit to membranes different sets of downstream effectors directly responsible for vesicle formation, movement, tethering and fusion. RAB9A is involved in the transport of proteins between the endosomes and the trans-Golgi network (TGN). Specifically uses NDE1/NDEL1 as an effector to interact with the dynein motor complex in order to control retrograde trafficking of RAB9-associated late endosomes to the TGN. Involved in the recruitment of SGSM2 to melanosomes and is required for the proper trafficking of melanogenic enzymes TYR, TYRP1 and DCT/TYRP2 to melanosomes in melanocytes. In Mus musculus (Mouse), this protein is Ras-related protein Rab-9A.